The chain runs to 180 residues: NADH-quinone oxidoreductase subunit I (180 aa).

4Fe-4S ferredoxin-type domains follow at residues I48–A80 and E90–D119. [4Fe-4S] cluster is bound by residues C60, C63, C66, C70, C99, C102, C105, and C109.

This sequence belongs to the complex I 23 kDa subunit family. NDH-1 is composed of 13 different subunits. Subunits NuoA, H, J, K, L, M, N constitute the membrane sector of the complex. [4Fe-4S] cluster serves as cofactor.

It is found in the cell inner membrane. It carries out the reaction a quinone + NADH + 5 H(+)(in) = a quinol + NAD(+) + 4 H(+)(out). Functionally, NDH-1 shuttles electrons from NADH, via FMN and iron-sulfur (Fe-S) centers, to quinones in the respiratory chain. The immediate electron acceptor for the enzyme in this species is believed to be ubiquinone. Couples the redox reaction to proton translocation (for every two electrons transferred, four hydrogen ions are translocated across the cytoplasmic membrane), and thus conserves the redox energy in a proton gradient. The protein is NADH-quinone oxidoreductase subunit I of Edwardsiella ictaluri (strain 93-146).